The following is a 334-amino-acid chain: MAPEMNNKLSYGEKKRAYVTFLAGTGDYVKGVVGLAKGLRKTKSKYPLVVAVLPDVPADHRRQLLDQGCVIKEIQPVYPPDNQTQFAMAYYVLNYSKLRIWKFVEYSKLIYLDGDIQVFENIDHLFDLPDGNFYAVKDCFCEKTWSHTPQYKIGYCQQCPDKVTWPESELGPKPPLYFNAGMFVYEPSLPTYYNLLETLKVVPPTPFAEQDFLNMYFKDIYKPIPPVYNLVLAMLWRHPENIELNEAKVVHYCAAGAKPWRFTGQEGNMEREDIKMLVEKWWDIYNDESLDYKNFNVHCGQKEDVHRKPKTLPQFFTDLSEADVLQCAKAPSAA.

The active site involves K97. Residues D113, D115, and H251 each contribute to the Mn(2+) site.

The protein belongs to the glycosyltransferase 8 family. Galactosyltransferase subfamily. A divalent metal cation serves as cofactor.

It is found in the cytoplasm. The catalysed reaction is myo-inositol + UDP-alpha-D-galactose = alpha-D-galactosyl-(1-&gt;3)-1D-myo-inositol + UDP + H(+). Galactinol synthase involved in the biosynthesis of raffinose family oligosaccharides (RFOs) that function as osmoprotectants. May promote plant stress tolerance. This is Galactinol synthase 3 (GOLS3) from Arabidopsis thaliana (Mouse-ear cress).